The primary structure comprises 186 residues: Glutathione S-transferase 1, isoform A (186 aa).

Residues methionine 1–aspartate 81 form the GST N-terminal domain. Glutathione contacts are provided by residues serine 9, histidine 50–isoleucine 52, and glutamate 65–arginine 67. One can recognise a GST C-terminal domain in the interval aspartate 92 to isoleucine 186.

This sequence belongs to the GST superfamily. Theta family. As to quaternary structure, homodimer.

The enzyme catalyses RX + glutathione = an S-substituted glutathione + a halide anion + H(+). In terms of biological role, conjugation of reduced glutathione to a wide number of exogenous and endogenous hydrophobic electrophiles. This Anopheles gambiae (African malaria mosquito) protein is Glutathione S-transferase 1, isoform A.